The sequence spans 84 residues: Large ribosomal subunit protein bL27 (84 aa).

The disordered stretch occupies residues 1 to 20 (MAHKKAGGSTRNGRDSNPKY).

The protein belongs to the bacterial ribosomal protein bL27 family.

The polypeptide is Large ribosomal subunit protein bL27 (Francisella philomiragia subsp. philomiragia (strain ATCC 25017 / CCUG 19701 / FSC 153 / O#319-036)).